A 670-amino-acid chain; its full sequence is Probable urocanate hydratase (670 aa).

NAD(+) is bound by residues 126 to 127 (GG), glutamine 204, 250 to 252 (GMS), glutamate 270, 316 to 317 (NV), 338 to 342 (QTSLH), 349 to 350 (FY), tyrosine 398, and glycine 590.

The protein belongs to the urocanase family. NAD(+) serves as cofactor.

It carries out the reaction 4-imidazolone-5-propanoate = trans-urocanate + H2O. Its pathway is amino-acid degradation; L-histidine degradation into L-glutamate; N-formimidoyl-L-glutamate from L-histidine: step 2/3. This Caenorhabditis elegans protein is Probable urocanate hydratase.